The sequence spans 258 residues: Acetylglutamate kinase (258 aa).

Residues 44 to 45 (GG), Arg-66, and Asn-158 each bind substrate. ATP-binding positions include 181 to 186 (DVSGIL) and 209 to 211 (IIT).

This sequence belongs to the acetylglutamate kinase family. ArgB subfamily. As to quaternary structure, homodimer.

The protein resides in the cytoplasm. The catalysed reaction is N-acetyl-L-glutamate + ATP = N-acetyl-L-glutamyl 5-phosphate + ADP. Its pathway is amino-acid biosynthesis; L-arginine biosynthesis; N(2)-acetyl-L-ornithine from L-glutamate: step 2/4. Its function is as follows. Catalyzes the ATP-dependent phosphorylation of N-acetyl-L-glutamate. This is Acetylglutamate kinase from Escherichia coli O6:K15:H31 (strain 536 / UPEC).